The following is a 695-amino-acid chain: Lupanine 17-hydroxylase [cytochrome c] (695 aa).

The first 26 residues, 1-26 (MSANKNIWIIRLGVAFVCVAIGAAQA), serve as a signal peptide directing secretion. The 80-residue stretch at 598–677 (AMAESGRHIF…ALQAFILQKA (80 aa)) folds into the Cytochrome c domain. Residues C612, C615, and H616 each coordinate heme c.

It belongs to the bacterial PQQ dehydrogenase family. In terms of assembly, monomer. It depends on pyrroloquinoline quinone as a cofactor. Heme c is required as a cofactor.

The protein resides in the periplasm. The enzyme catalyses lupanine + 2 Fe(III)-[cytochrome c] + H2O = 17-hydroxylupanine + 2 Fe(II)-[cytochrome c] + 2 H(+). Catalyzes the first reaction in the catabolism of the alkaloid lupanine. It dehydrogenates lupanine, which can then be hydrated to produce 17-hydroxylupanine. This chain is Lupanine 17-hydroxylase [cytochrome c] (luh), found in Pseudomonas sp.